Here is a 205-residue protein sequence, read N- to C-terminus: MSVGILGTKVGMTQFFDEAGLSIPVTVIQVGPCVITQIKAVSTDGYNAIQVGYKQVAEQKLNKPLLGHLKKSQAPPLKYLREYEMKSTDDFEVSQILSTDLFQVGQKINVSSRSVGKGFSGYQKRHHFSRGPMSHGSKNHRQPGSIGAGTTPGRVYPGKNMAGQLGNKKVTIKNLQIVSINSENDLLIVKGAVPGKPGALVKISK.

The disordered stretch occupies residues 129–154 (SRGPMSHGSKNHRQPGSIGAGTTPGR).

The protein belongs to the universal ribosomal protein uL3 family. In terms of assembly, part of the 50S ribosomal subunit.

The protein resides in the plastid. It localises to the chloroplast. In terms of biological role, one of the primary rRNA binding proteins, it binds directly near the 3'-end of the 23S rRNA, where it nucleates assembly of the 50S subunit. The chain is Large ribosomal subunit protein uL3c (rpl3) from Pyropia yezoensis (Susabi-nori).